Reading from the N-terminus, the 498-residue chain is Interferon regulatory factor 5 (498 aa).

Thr10 carries the post-translational modification Phosphothreonine. The Nuclear localization signal signature appears at 12 to 18 (PRRVRLK). Residues 14–122 (RVRLKPWLVA…QPYKIYEVCS (109 aa)) constitute a DNA-binding region (IRF tryptophan pentad repeat). A disordered region spans residues 121–207 (CSNGPAPTDS…SPLAPPPGNP (87 aa)). The Nuclear export signal signature appears at 150–160 (LQRMLPSLSLT). Ser158 carries the phosphoserine; by TBK1 modification. Residues 168-206 (TLQPPTLRPPTLQPPTLQPPVVLGPPAPDPSPLAPPPGN) show a composition bias toward pro residues. Ser293 is subject to Phosphoserine; by TBK1. The residue at position 301 (Ser301) is a Phosphoserine. Residues Lys411 and Lys412 each participate in a glycyl lysine isopeptide (Lys-Gly) (interchain with G-Cter in ubiquitin) cross-link. 4 positions are modified to phosphoserine: Ser431, Ser435, Ser437, and Ser440. Phosphoserine; by IKKB is present on Ser446. The interval 478 to 498 (PPGAGLGVGQGPWPMHPAGMQ) is disordered.

This sequence belongs to the IRF family. As to quaternary structure, homodimer, when phosphorylated. Interacts with TASL (via pLxIS motif); interaction takes place downstream of TLR7, TLR8 or TLR9, leading to its activation. Interacts with MYD88 and TRAF6. Phosphorylation of serine and threonine residues by IKBKB in a C-terminal autoinhibitory region, stimulates dimerization, transport into the nucleus, assembly with the coactivator CBP/EP300 and initiation of transcription. Post-translationally, 'Lys-63'-linked polyubiquitination by TRAF6 is required for activation.

It is found in the cytoplasm. It localises to the nucleus. With respect to regulation, maintained as a monomer in an autoinhibited state. Phosphorylation and activation follow the following steps: innate adapter protein TASL recruits IRF5, thereby licensing IRF5 for phosphorylation by IKBKB. Phosphorylated IRF5 dissociates from the adapter proteins, dimerizes, and then enters the nucleus to induce IFNs. Its activity is regulated as follows. (Microbial infection) Activated upon coronavirus SARS-CoV-2 infection. Its function is as follows. Transcription factor that plays a critical role in innate immunity by activating expression of type I interferon (IFN) IFNA and INFB and inflammatory cytokines downstream of endolysosomal toll-like receptors TLR7, TLR8 and TLR9. Regulates the transcription of type I IFN genes (IFN-alpha and IFN-beta) and IFN-stimulated genes (ISG) by binding to an interferon-stimulated response element (ISRE) in their promoters. Can efficiently activate both the IFN-beta (IFNB) and the IFN-alpha (IFNA) genes and mediate their induction downstream of the TLR-activated, MyD88-dependent pathway. Key transcription factor regulating the IFN response during SARS-CoV-2 infection. The chain is Interferon regulatory factor 5 from Homo sapiens (Human).